The primary structure comprises 1420 residues: DNA-directed RNA polymerase subunit beta' (1420 aa).

Residues Cys71, Cys73, Cys86, and Cys89 each contribute to the Zn(2+) site. Mg(2+)-binding residues include Asp461, Asp463, and Asp465. Zn(2+) contacts are provided by Cys815, Cys889, Cys896, and Cys899.

This sequence belongs to the RNA polymerase beta' chain family. The RNAP catalytic core consists of 2 alpha, 1 beta, 1 beta' and 1 omega subunit. When a sigma factor is associated with the core the holoenzyme is formed, which can initiate transcription. It depends on Mg(2+) as a cofactor. The cofactor is Zn(2+).

It carries out the reaction RNA(n) + a ribonucleoside 5'-triphosphate = RNA(n+1) + diphosphate. DNA-dependent RNA polymerase catalyzes the transcription of DNA into RNA using the four ribonucleoside triphosphates as substrates. This chain is DNA-directed RNA polymerase subunit beta', found in Histophilus somni (strain 2336) (Haemophilus somnus).